The following is a 328-amino-acid chain: MKFYNSTNEIPEEMLKGIDLTYPQLTYLPETGILYDNTYNEKTVPIISGGGSGHEPAHVGYVGSGMLAAAVTGPLFIPPKSKNILKAIRQVNSGKGVFVIIKNFEADLKEFNEAIKEARTEGIDVRYIVSHDDISVNAYNFHKRHRGVAGTILLHKILGAFAKEGGSIDEIEQLALSLSPEIYTLGVALAPVHFPHQKTSFVLAEDEVSFGIGIHGEPGYRVEKFEGSERIAIELVNKLKAEINWQKKANKNYILLVNGLGSTTLMELYSFQYDVMRLLELEGLSVKFCKVGNLMTSCDMSGISLTLCSVKDPKWLDYLNVPTGAFAW.

Residues 6–328 enclose the DhaK domain; it reads STNEIPEEML…LNVPTGAFAW (323 aa). Histidine 215 is modified (tele-(1,2,3-trihydroxypropan-2-yl)histidine).

As to quaternary structure, homodimer. Interacts with a homodimer of DhaS.

Functionally, coactivator for the transcription factor DhaS. The heterotetramer formed by DhaQ and DhaS functions as a transcriptional regulator. Activated by covalent binding of dihydroxyacetone to DhaQ. The complex activates the dhaKLM operon. The polypeptide is DhaKLM operon coactivator DhaQ (dhaQ) (Lactococcus lactis subsp. lactis (strain IL1403) (Streptococcus lactis)).